Here is a 502-residue protein sequence, read N- to C-terminus: Mannitol 2-dehydrogenase (502 aa).

Position 37–48 (37–48 (IVHIGVGGFHRA)) interacts with NAD(+).

It belongs to the mannitol dehydrogenase family. As to quaternary structure, monomer.

It catalyses the reaction D-mannitol + NAD(+) = D-fructose + NADH + H(+). Catalyzes the NAD(H)-dependent interconversion of D-fructose and D-mannitol in the mannitol metabolic pathway. In Aspergillus clavatus (strain ATCC 1007 / CBS 513.65 / DSM 816 / NCTC 3887 / NRRL 1 / QM 1276 / 107), this protein is Mannitol 2-dehydrogenase.